The sequence spans 426 residues: MKQLRLEPVVQVRGEINIPGSKSISNRALLLATLAKGTTTLTNLLDSDDIRHMLASLKQLGVGYRLSQNNTVCELTGLGGAISADTAQTLFLGNAGTAMRPLCAALTLGRGEFTLTGEPRMEERPIGDLVDALKQLGANIMYLKNEGFPPLTINATGLNGGDVEIAGDLSSQFLTALLMVAPLAKGSVNIHVKGELVSKPYIDITLALMAQFGVQVINHDYARFEILAGQQYVSPGKVLVEGDASSASYFLAAGAIKGGEVKVTGVGRLSIQGDVKFADVLEKMGADIEWGDDYIIARGAPLTAVDLDMNHIPDAAMTIATAALFAKGTTTIRNIYNWRIKETDRLAAMATELRKVGALVEEGHDYIQITPPAVLNTAEIDTYNDHRMAMCFSMMAFADCGITINDPDCTSKTFPDYFAQFASLKA.

Lys-22, Ser-23, and Arg-27 together coordinate 3-phosphoshikimate. Lys-22 serves as a coordination point for phosphoenolpyruvate. Phosphoenolpyruvate-binding residues include Gly-96 and Arg-124. Positions 170, 171, 172, 198, 314, 337, and 341 each coordinate 3-phosphoshikimate. Gln-172 is a binding site for phosphoenolpyruvate. Asp-314 serves as the catalytic Proton acceptor. Phosphoenolpyruvate-binding residues include Arg-345, Arg-387, and Lys-412.

The protein belongs to the EPSP synthase family. In terms of assembly, monomer.

Its subcellular location is the cytoplasm. It catalyses the reaction 3-phosphoshikimate + phosphoenolpyruvate = 5-O-(1-carboxyvinyl)-3-phosphoshikimate + phosphate. Its pathway is metabolic intermediate biosynthesis; chorismate biosynthesis; chorismate from D-erythrose 4-phosphate and phosphoenolpyruvate: step 6/7. Functionally, catalyzes the transfer of the enolpyruvyl moiety of phosphoenolpyruvate (PEP) to the 5-hydroxyl of shikimate-3-phosphate (S3P) to produce enolpyruvyl shikimate-3-phosphate and inorganic phosphate. This is 3-phosphoshikimate 1-carboxyvinyltransferase from Shewanella sp. (strain MR-7).